The sequence spans 379 residues: PqqA peptide cyclase (379 aa).

The Radical SAM core domain maps to 8 to 220 (LPAPIGLLAE…IRVVEEARER (213 aa)). Positions 22, 26, and 29 each coordinate [4Fe-4S] cluster.

This sequence belongs to the radical SAM superfamily. PqqE family. As to quaternary structure, interacts with PqqD. The interaction is necessary for activity of PqqE. [4Fe-4S] cluster is required as a cofactor.

The catalysed reaction is [PQQ precursor protein] + S-adenosyl-L-methionine = E-Y cross-linked-[PQQ precursor protein] + 5'-deoxyadenosine + L-methionine + H(+). The protein operates within cofactor biosynthesis; pyrroloquinoline quinone biosynthesis. In terms of biological role, catalyzes the cross-linking of a glutamate residue and a tyrosine residue in the PqqA protein as part of the biosynthesis of pyrroloquinoline quinone (PQQ). The polypeptide is PqqA peptide cyclase (Methylobacterium sp. (strain 4-46)).